A 408-amino-acid chain; its full sequence is Glutamate N-acetyltransferase (408 aa).

Thr150, Lys176, Thr189, Glu271, Asn403, and Thr408 together coordinate substrate. Thr189 serves as the catalytic Nucleophile.

This sequence belongs to the ArgJ family. In terms of assembly, heterotetramer of two alpha and two beta chains.

It is found in the cytoplasm. It carries out the reaction N(2)-acetyl-L-ornithine + L-glutamate = N-acetyl-L-glutamate + L-ornithine. The protein operates within amino-acid biosynthesis; L-arginine biosynthesis; L-ornithine and N-acetyl-L-glutamate from L-glutamate and N(2)-acetyl-L-ornithine (cyclic): step 1/1. In terms of biological role, catalyzes the transfer of the acetyl group from N(2)-acetylornithine to glutamate, forming N-acetylglutamate and L-ornithine. The sequence is that of Glutamate N-acetyltransferase from Methanococcus vannielii (strain ATCC 35089 / DSM 1224 / JCM 13029 / OCM 148 / SB).